An 87-amino-acid polypeptide reads, in one-letter code: Acylphosphatase (87 aa).

An Acylphosphatase-like domain is found at 2–87; sequence RLTALVSGHV…ETGLREFHIY (86 aa). Residues Arg-17 and Asn-35 contribute to the active site.

It belongs to the acylphosphatase family.

The enzyme catalyses an acyl phosphate + H2O = a carboxylate + phosphate + H(+). The chain is Acylphosphatase (acyP) from Deinococcus radiodurans (strain ATCC 13939 / DSM 20539 / JCM 16871 / CCUG 27074 / LMG 4051 / NBRC 15346 / NCIMB 9279 / VKM B-1422 / R1).